Reading from the N-terminus, the 574-residue chain is PI-PLC X domain-containing protein DDB_G0269228 (574 aa).

Residues 1-42 (MFSSIMFKKKPKQNLNENEITSQSTTTTSTLSDSKPSEKKIK) are disordered. The segment covering 21–34 (TSQSTTTTSTLSDS) has biased composition (low complexity). A PI-PLC X-box domain is found at 270–449 (GIKSSSLRVP…LKKRIINDDG (180 aa)).

In Dictyostelium discoideum (Social amoeba), this protein is PI-PLC X domain-containing protein DDB_G0269228.